The primary structure comprises 421 residues: Gamma-glutamyl phosphate reductase (421 aa).

The protein belongs to the gamma-glutamyl phosphate reductase family.

The protein resides in the cytoplasm. It catalyses the reaction L-glutamate 5-semialdehyde + phosphate + NADP(+) = L-glutamyl 5-phosphate + NADPH + H(+). It participates in amino-acid biosynthesis; L-proline biosynthesis; L-glutamate 5-semialdehyde from L-glutamate: step 2/2. Its function is as follows. Catalyzes the NADPH-dependent reduction of L-glutamate 5-phosphate into L-glutamate 5-semialdehyde and phosphate. The product spontaneously undergoes cyclization to form 1-pyrroline-5-carboxylate. The sequence is that of Gamma-glutamyl phosphate reductase from Azotobacter vinelandii (strain DJ / ATCC BAA-1303).